The chain runs to 986 residues: Anoctamin-1 (986 aa).

The Cytoplasmic portion of the chain corresponds to methionine 1–alanine 333. The segment at leucine 79 to glutamate 121 is disordered. 2 positions are modified to phosphoserine: serine 107 and serine 196. A helical membrane pass occupies residues tryptophan 334–leucine 354. Topologically, residues tyrosine 355 to asparagine 406 are extracellular. Intrachain disulfides connect cysteine 370–cysteine 395, cysteine 379–cysteine 862, cysteine 382–cysteine 386, and cysteine 651–cysteine 656. A helical membrane pass occupies residues proline 407–tryptophan 427. Glutamate 425 is a Ca(2+) binding site. Residues lysine 428 to asparagine 519 are Cytoplasmic-facing. Residues leucine 520–tyrosine 540 form a helical membrane-spanning segment. Residues arginine 541–alanine 568 lie on the Extracellular side of the membrane. Residues valine 569–tryptophan 589 form a helical membrane-spanning segment. Residues leucine 590–isoleucine 607 are Cytoplasmic-facing. Residues phenylalanine 608–phenylalanine 628 traverse the membrane as a helical segment. Residues lysine 629–leucine 657 lie on the Extracellular side of the membrane. Residues methionine 658 to leucine 678 traverse the membrane as a helical segment. Residues asparagine 677, glutamate 680, glutamate 728, glutamate 731, glutamate 760, and aspartate 764 each coordinate Ca(2+). The Cytoplasmic portion of the chain corresponds to phenylalanine 679–leucine 725. 2 consecutive transmembrane segments (helical) span residues threonine 726–phenylalanine 746 and proline 747–lysine 767. At phenylalanine 768–glycine 784 the chain is on the cytoplasmic side. A helical membrane pass occupies residues isoleucine 785–isoleucine 805. At serine 806–alanine 892 the chain is on the extracellular side. Asparagine 832 carries N-linked (GlcNAc...) asparagine glycosylation. The helical transmembrane segment at phenylalanine 893–proline 913 threads the bilayer. Ca(2+)-binding residues include aspartate 909 and aspartate 914. At aspartate 914–leucine 986 the chain is on the cytoplasmic side. The segment covering lysine 951–cysteine 960 has biased composition (basic and acidic residues). The tract at residues lysine 951–leucine 986 is disordered.

The protein belongs to the anoctamin family. Homodimer. Interacts with CFTR. Interacts with TRPV4. In terms of tissue distribution, expressed in nasal epithelial cells (at protein level). In the kidney, expressed in the collecting duct (at protein level). Broadly expressed with higher levels in liver, skeletal muscle and gastrointestinal muscles. Expressed in eccrine sweat glands.

The protein localises to the apical cell membrane. Its subcellular location is the presynapse. It carries out the reaction chloride(in) = chloride(out). Its activity is regulated as follows. ATP and calmodulin are essential for its activation. Channel activity is inhibited by CFTR protein and by chloride inhibitors such as niflumic acid (NFA) and 4,4'-diisothiocyanatostilbene-2,2'-disulfonic acid (DIDS). Activated by heat with activation seen at temperatures above 44 degrees Celsius. Activated by BDNF in radial glial cells. Its function is as follows. Calcium-activated chloride channel (CaCC). Plays a role in transepithelial anion transport and smooth muscle contraction. Required for the normal functioning of the interstitial cells of Cajal (ICCs) which generate electrical pacemaker activity in gastrointestinal smooth muscles. Acts as a major contributor to basal and stimulated chloride conductance in airway epithelial cells and plays an important role in tracheal cartilage development. Required for CFTR activation by enhancing endoplasmic reticulum Ca(2+) store release and is also required for CFTR membrane expression. Required for basal and ATP-dependent mucus secretion in airways and intestine, probably by controlling exocytosis of mucus-filled granules by providing Ca(2+) to an apical signaling compartment. Contributes to airway mucus expression induced by interleukins IL3 and IL8 and by the asthma-associated protein CLCA1 and is required for expression of mucin MUC5AC. However, was shown in another study not to be required for MUC5AC expression. Plays a role in the propagation of Ca(2+) waves in Kolliker's organ in the cochlea and contributes to the refinement of auditory brainstem circuitries prior to hearing onset. In vomeronasal sensory neurons, modulates spontaneous firing patterns in the absence of stimuli as well as the firing pattern of pheromone-evoked activity. Responsible for calcium-activated chloride channel activity in type I taste cells of the vallate papillae. Acts as a heat sensor in nociceptive neurons. In dorsal root ganglion neurons, plays a role in mediating non-histaminergic Mas-related G-protein coupled receptor (MRGPR)-dependent itching, acting as a downstream effector of MRGPRs. In the developing brain, required for the Ca(2+)-dependent process extension of radial glial cells. In terms of biological role, calcium-activated chloride channel (CaCC). Contributes to calcium-activated chloride secretion in human sweat gland epithelial cells. Shows increased basal chloride permeability and decreased Ca(2+)-induced chloride permeability. Functionally, calcium-activated chloride channel (CaCC). Shows increased sensitivity to intracellular Ca(2+). This Homo sapiens (Human) protein is Anoctamin-1 (ANO1).